The primary structure comprises 502 residues: Smr domain-containing protein C1235.03 (502 aa).

The tract at residues 150–184 is disordered; the sequence is LITSNIGHRSRQRKKKTKKATNSRKPLSKFQSNTE. A compositionally biased stretch (basic residues) spans 157 to 171; that stretch reads HRSRQRKKKTKKATN. Residues 411 to 459 enclose the Smr domain; the sequence is SLDLHGATVREAKTIVRERVAAWWAKEADTSPNSIRPFVIVTGRGNHSI.

It localises to the nucleus. It is found in the nucleolus. The protein is Smr domain-containing protein C1235.03 of Schizosaccharomyces pombe (strain 972 / ATCC 24843) (Fission yeast).